Here is a 471-residue protein sequence, read N- to C-terminus: V-type ATP synthase beta chain (471 aa).

Belongs to the ATPase alpha/beta chains family.

Produces ATP from ADP in the presence of a proton gradient across the membrane. The V-type beta chain is a regulatory subunit. The sequence is that of V-type ATP synthase beta chain from Streptococcus pyogenes serotype M12 (strain MGAS2096).